A 556-amino-acid polypeptide reads, in one-letter code: 2-succinyl-5-enolpyruvyl-6-hydroxy-3-cyclohexene-1-carboxylate synthase (556 aa).

The protein belongs to the TPP enzyme family. MenD subfamily. As to quaternary structure, homodimer. It depends on Mg(2+) as a cofactor. Mn(2+) is required as a cofactor. Requires thiamine diphosphate as cofactor.

It carries out the reaction isochorismate + 2-oxoglutarate + H(+) = 5-enolpyruvoyl-6-hydroxy-2-succinyl-cyclohex-3-ene-1-carboxylate + CO2. Its pathway is quinol/quinone metabolism; 1,4-dihydroxy-2-naphthoate biosynthesis; 1,4-dihydroxy-2-naphthoate from chorismate: step 2/7. It participates in quinol/quinone metabolism; menaquinone biosynthesis. Functionally, catalyzes the thiamine diphosphate-dependent decarboxylation of 2-oxoglutarate and the subsequent addition of the resulting succinic semialdehyde-thiamine pyrophosphate anion to isochorismate to yield 2-succinyl-5-enolpyruvyl-6-hydroxy-3-cyclohexene-1-carboxylate (SEPHCHC). This chain is 2-succinyl-5-enolpyruvyl-6-hydroxy-3-cyclohexene-1-carboxylate synthase, found in Salmonella dublin (strain CT_02021853).